The primary structure comprises 179 residues: Translationally-controlled tumor protein homolog (179 aa).

Positions 1 to 179 (MIIYKDIISG…WKHGLEEMKV (179 aa)) constitute a TCTP domain.

The protein belongs to the TCTP family.

The protein resides in the cytoplasm. Its subcellular location is the cytoskeleton. Involved in protein synthesis. Involved in microtubule stabilization. Involved in osmoadaptation. This chain is Translationally-controlled tumor protein homolog, found in Emericella nidulans (strain FGSC A4 / ATCC 38163 / CBS 112.46 / NRRL 194 / M139) (Aspergillus nidulans).